The chain runs to 591 residues: Aspartate--tRNA ligase (591 aa).

Position 175 (Glu-175) interacts with L-aspartate. The interval 199 to 202 is aspartate; the sequence is QLFK. Residue Arg-221 coordinates L-aspartate. Residues 221–223 and Gln-230 each bind ATP; that span reads RDE. An L-aspartate-binding site is contributed by His-449. Glu-483 is a binding site for ATP. An L-aspartate-binding site is contributed by Arg-490. 535-538 serves as a coordination point for ATP; sequence GLDR.

This sequence belongs to the class-II aminoacyl-tRNA synthetase family. Type 1 subfamily. As to quaternary structure, homodimer.

It localises to the cytoplasm. The enzyme catalyses tRNA(Asp) + L-aspartate + ATP = L-aspartyl-tRNA(Asp) + AMP + diphosphate. Catalyzes the attachment of L-aspartate to tRNA(Asp) in a two-step reaction: L-aspartate is first activated by ATP to form Asp-AMP and then transferred to the acceptor end of tRNA(Asp). The protein is Aspartate--tRNA ligase of Oceanobacillus iheyensis (strain DSM 14371 / CIP 107618 / JCM 11309 / KCTC 3954 / HTE831).